Reading from the N-terminus, the 526-residue chain is tRNA (guanine(26)-N(2))-dimethyltransferase (526 aa).

A compositionally biased stretch (polar residues) spans 1–10 (MTENVNSSGD). A disordered region spans residues 1 to 20 (MTENVNSSGDSAIKSEDKEE). The Trm1 methyltransferase domain occupies 22-441 (TVIQEGQAKV…APMHLLWDIY (420 aa)). S-adenosyl-L-methionine is bound by residues Arg47, Arg104, and Asp122. Zn(2+) is bound by residues Cys286, Cys289, Cys325, and Cys328. The tract at residues 498–526 (KGKNWGPRQKAKGSVNSTKAGFQLTEHKE) is disordered.

The protein belongs to the class I-like SAM-binding methyltransferase superfamily. Trm1 family.

It catalyses the reaction guanosine(26) in tRNA + 2 S-adenosyl-L-methionine = N(2)-dimethylguanosine(26) in tRNA + 2 S-adenosyl-L-homocysteine + 2 H(+). Its function is as follows. Dimethylates a single guanine residue at position 26 of most tRNAs using S-adenosyl-L-methionine as donor of the methyl groups. The sequence is that of tRNA (guanine(26)-N(2))-dimethyltransferase (trm-1) from Caenorhabditis elegans.